We begin with the raw amino-acid sequence, 366 residues long: NADH-quinone oxidoreductase subunit D (366 aa).

Belongs to the complex I 49 kDa subunit family. NDH-1 is composed of 14 different subunits. Subunits NuoB, C, D, E, F, and G constitute the peripheral sector of the complex.

It is found in the cell membrane. The enzyme catalyses a quinone + NADH + 5 H(+)(in) = a quinol + NAD(+) + 4 H(+)(out). Functionally, NDH-1 shuttles electrons from NADH, via FMN and iron-sulfur (Fe-S) centers, to quinones in the respiratory chain. The immediate electron acceptor for the enzyme in this species is believed to be a menaquinone. Couples the redox reaction to proton translocation (for every two electrons transferred, four hydrogen ions are translocated across the cytoplasmic membrane), and thus conserves the redox energy in a proton gradient. The protein is NADH-quinone oxidoreductase subunit D of Bacillus cereus (strain ATCC 14579 / DSM 31 / CCUG 7414 / JCM 2152 / NBRC 15305 / NCIMB 9373 / NCTC 2599 / NRRL B-3711).